We begin with the raw amino-acid sequence, 933 residues long: Melanoma-associated antigen E1 (933 aa).

4 disordered regions span residues 1 to 113 (MSLV…VSAG), 149 to 236 (GASI…GINL), 256 to 282 (SDISVPPPSAEGLSTSMPPPSGEVQST), and 360 to 393 (TSGLHDLEEESSISQMPLAAEGPSASGSSIEDEN). Positions 8 to 23 (SRRRRGGRANGRKNSG) are enriched in basic residues. Polar residues-rich tracts occupy residues 64-97 (GGSSTSVPPTASEGSSAPGQLITSEGRNTSQLPT), 149-166 (GASISEQPQSHEGPNVQP), 173-184 (GTSVPPTFSEES), and 219-236 (APSTSVPPTASNGLGINL). MAGE domains lie at 467 to 666 (MEQN…YNEA) and 721 to 912 (LESK…YREA). An interaction with DTNA region spans residues 719-933 (SRLESKSRKL…RRPLVVRNLR (215 aa)).

In terms of assembly, interacts with DTNA. Interacts with TRIM28.

It is found in the cytoplasm. The protein resides in the perinuclear region. It localises to the nucleus. Its subcellular location is the cell membrane. May enhance ubiquitin ligase activity of RING-type zinc finger-containing E3 ubiquitin-protein ligases. Proposed to act through recruitment and/or stabilization of the Ubl-conjugating enzyme (E2) at the E3:substrate complex. The polypeptide is Melanoma-associated antigen E1 (Magee1) (Rattus norvegicus (Rat)).